Reading from the N-terminus, the 363-residue chain is Glutamate 5-kinase (363 aa).

Position 6 (K6) interacts with ATP. The substrate site is built by S46, D133, and N145. Residues 165 to 166 (TD) and 207 to 213 (TGGMHTK) each bind ATP. The PUA domain maps to 271-349 (TGRLLLDEGA…RDIEAVLGFT (79 aa)).

Belongs to the glutamate 5-kinase family.

It is found in the cytoplasm. It carries out the reaction L-glutamate + ATP = L-glutamyl 5-phosphate + ADP. It functions in the pathway amino-acid biosynthesis; L-proline biosynthesis; L-glutamate 5-semialdehyde from L-glutamate: step 1/2. Functionally, catalyzes the transfer of a phosphate group to glutamate to form L-glutamate 5-phosphate. The protein is Glutamate 5-kinase of Deinococcus geothermalis (strain DSM 11300 / CIP 105573 / AG-3a).